Reading from the N-terminus, the 68-residue chain is Putative alpha-conotoxin Qc alphaL-1 (68 aa).

Positions 1 to 21 are cleaved as a signal peptide; sequence MGMRMMFTMFLLVVLATTVVS. Positions 22 to 49 are excised as a propeptide; that stretch reads INLDHAFDGRNAAANNKATDLMARTVRR. A disulfide bond links C51 and C64.

The protein belongs to the conotoxin A superfamily. Expressed by the venom duct.

Its subcellular location is the secreted. Alpha-conotoxins act on postsynaptic membranes, they bind to the nicotinic acetylcholine receptors (nAChR) and thus inhibit them. This is Putative alpha-conotoxin Qc alphaL-1 from Conus quercinus (Oak cone).